The chain runs to 32 residues: MGKEIVESAILSSVLVLVGLAVGFLLLKVQGE.

The helical transmembrane segment at 9–29 (AILSSVLVLVGLAVGFLLLKV) threads the bilayer.

The protein belongs to the PetM family. In terms of assembly, the 4 large subunits of the cytochrome b6-f complex are cytochrome b6, subunit IV (17 kDa polypeptide, PetD), cytochrome f and the Rieske protein, while the 4 small subunits are PetG, PetL, PetM and PetN. The complex functions as a dimer.

It is found in the plastid. The protein resides in the chloroplast thylakoid membrane. Component of the cytochrome b6-f complex, which mediates electron transfer between photosystem II (PSII) and photosystem I (PSI), cyclic electron flow around PSI, and state transitions. This Porphyra purpurea (Red seaweed) protein is Cytochrome b6-f complex subunit 7.